The sequence spans 94 residues: Large ribosomal subunit protein eL14 (94 aa).

It belongs to the eukaryotic ribosomal protein eL14 family.

The protein is Large ribosomal subunit protein eL14 of Methanopyrus kandleri (strain AV19 / DSM 6324 / JCM 9639 / NBRC 100938).